A 509-amino-acid chain; its full sequence is Scavenger receptor class B member 1 (509 aa).

The Cytoplasmic segment spans residues 1 to 11; that stretch reads MGGSSRARWVA. A helical transmembrane segment spans residues 12–32; it reads LGLGALGLLFAALGVVMILMV. Residues 33–440 are Extracellular-facing; the sequence is PSLIKQQVLK…YTQLVLMPQV (408 aa). N-linked (GlcNAc...) asparagine glycosylation is found at asparagine 102, asparagine 108, asparagine 116, asparagine 173, asparagine 212, asparagine 227, asparagine 255, asparagine 288, asparagine 310, asparagine 330, and asparagine 383. Cysteine 251 and cysteine 384 are oxidised to a cystine. The chain crosses the membrane as a helical span at residues 441-461; it reads LHYAQYVLLGLGGLLLLVPII. The S-palmitoyl cysteine moiety is linked to residue cysteine 462. The Cytoplasmic portion of the chain corresponds to 462 to 509; that stretch reads CQLRSQEKCFLFWSGSKKGSQDKEAIQAYSESLMSPAAKGTVLQEAKL.

The protein belongs to the CD36 family. The C-terminal region binds to PDZK1. Post-translationally, N-glycosylated. In terms of processing, the six cysteines of the extracellular domain are all involved in intramolecular disulfide bonds. In terms of tissue distribution, expressed primarily in liver, ovary and adrenal gland, and, at lower levels in other non-placental steroidogenic tissues, including adipose tissue, mammary gland and testis (at protein level). Isoform 2 is expressed at lower levels than isoform 1 in liver, testis and adrenal gland. At the mRNA, but not at the protein level, isoform 2 is the predominant isoform in testis (80%).

The protein localises to the cell membrane. It is found in the membrane. It localises to the caveola. Its function is as follows. Receptor for different ligands such as phospholipids, cholesterol ester, lipoproteins, phosphatidylserine and apoptotic cells. Both isoform 1 and isoform 2 act as receptors for HDL, mediating selective uptake of cholesteryl ether and HDL-dependent cholesterol efflux. Also facilitates the flux of free and esterified cholesterol between the cell surface and apoB-containing lipoproteins and modified lipoproteins, although less efficiently than HDL. May be involved in the phagocytosis of apoptotic cells, via its phosphatidylserine binding activity. The sequence is that of Scavenger receptor class B member 1 (Scarb1) from Mus musculus (Mouse).